The chain runs to 121 residues: Darcynin homolog (121 aa).

Belongs to the darcynin family.

In Streptomyces avermitilis (strain ATCC 31267 / DSM 46492 / JCM 5070 / NBRC 14893 / NCIMB 12804 / NRRL 8165 / MA-4680), this protein is Darcynin homolog.